The following is a 711-amino-acid chain: MSLVVGQSLGLTLVGDGLSLRNSKINVGKSKFFSVNRRRLARAALVQARPKEDGAAASPSPSSRPASVVQYRRADLADDLQAEARALGRAIDASIYSPELIARKHGSQPFKALRRSLEILGALGGFALKLGIDQKQGNLEKNMKKRAIELRRIFTRLGPTFVKLGQGLSTRPDLCPPDYLEELAELQDALPTFPDAEAFACIERELDLSLETIFSSVSPEPIAAASLGQVYKAQLRYSGQVVAVKVQRPGIEEAIGLDFYLIRGVGKLINKYVDFITTDVLTLIDEFACRVYQELNYVQEAQNARRFKKLYADKADVLVPDIFWDYTSRKVLTMEWVEGTKLNEQLAIESQGLKVLDLVNTGIQCSLRQLLEYGFFHADPHPGNLLATPDGKLAFLDFGMMSETPEEARFAIIGHVVHLVNRDYEAMARDYYALKFLSPDVDVTPIIPALRDFFDDALNYTVSELNFKTLVDGLGAVFYQYPFNVPPYYALILRSLTVLEGLALYADPNFKVLAASYPYFAKRLLTDPNPYLRDALIELLFKDGKFRWNRLENLLQQGSKDRDFSAKDALQPVLKLLLDPNGEELRLLVIKEAVRVSEAIALGTVVDTYNSLPEFLRSLVFNGNGNGPLTMSTAELQSTLELRDQVSRIWGLLQSSESFDPAILQPILQVLQQPEARRLGGRVAGGVGQRLAARFLQQLLRATTPSSAPSP.

A chloroplast-targeting transit peptide spans 1–42 (MSLVVGQSLGLTLVGDGLSLRNSKINVGKSKFFSVNRRRLAR). Residues 216 to 546 (SVSPEPIAAA…IELLFKDGKF (331 aa)) enclose the Protein kinase domain. Residues 222–230 (IAAASLGQV) and Lys245 each bind ATP. Catalysis depends on Asp379, which acts as the Proton acceptor.

Belongs to the protein kinase superfamily. ADCK protein kinase family. In terms of assembly, interacts with ABC1K1 in plastoglobules (PG). Interacts with PGM48.

The protein resides in the plastid. Its subcellular location is the chloroplast. The protein localises to the plastoglobule. The enzyme catalyses L-seryl-[protein] + ATP = O-phospho-L-seryl-[protein] + ADP + H(+). The catalysed reaction is L-threonyl-[protein] + ATP = O-phospho-L-threonyl-[protein] + ADP + H(+). In terms of biological role, kinase that can phosphorylate the tocopherol cyclase VTE1, a key enzyme of tocopherol (vitamin E) metabolism and involved in the recycling of oxidated alpha-tocopherol quinone, possibly stabilizing it at plastoglobules. Also regulates membrane prenylquinone composition. Required for photooxidative stress responses to prevent photosystem II core and chlorophyll degradations. Together with ABC1K1, contributes to plastoglobule (PG) function in prenyl-lipid metabolism, stress response, and thylakoid remodeling. Promotes photodamage of chloroplasts under continuous red light, thus working in opposition to ABC1K1. This chain is Protein ACTIVITY OF BC1 COMPLEX KINASE 3, chloroplastic, found in Arabidopsis thaliana (Mouse-ear cress).